The sequence spans 701 residues: T-cell immunomodulatory protein homolog (701 aa).

The first 29 residues, 1–29 (MVKCGKYVLILELLLLTLLYNLIKRVSNS), serve as a signal peptide directing secretion. The Extracellular portion of the chain corresponds to 30 to 657 (GETVSSFVDG…IQLSVNPSNK (628 aa)). N-linked (GlcNAc...) asparagine glycans are attached at residues asparagine 148, asparagine 180, asparagine 217, asparagine 258, asparagine 458, asparagine 522, and asparagine 571. The chain crosses the membrane as a helical span at residues 658–678 (FYSIIYITLICLSVIGVLIFI). Over 679 to 701 (LDRKEKIEDSKEEMGFKSHFVIG) the chain is Cytoplasmic.

The protein belongs to the TIP family.

It is found in the membrane. In terms of biological role, may protect the parasite against attack by the host immune system by immunomodulation. The sequence is that of T-cell immunomodulatory protein homolog from Plasmodium yoelii yoelii.